Reading from the N-terminus, the 492-residue chain is Dynein regulatory complex subunit 2 (492 aa).

Coiled-coil stretches lie at residues 16–95, 256–318, and 373–401; these read LTEE…FERV, VQSA…AAQA, and LSEE…HDYS.

This sequence belongs to the DRC2 family. Component of the nexin-dynein regulatory complex (N-DRC).

The protein localises to the cytoplasm. Its subcellular location is the cytoskeleton. It localises to the flagellum basal body. The protein resides in the cell projection. It is found in the cilium. The protein localises to the flagellum. Its subcellular location is the flagellum axoneme. Component of the nexin-dynein regulatory complex (N-DRC), a key regulator of ciliary/flagellar motility which maintains the alignment and integrity of the distal axoneme and regulates microtubule sliding in motile axonemes. Plays a critical role in the assembly of N-DRC and also stabilizes the assembly of multiple inner dynein arms and radial spokes. Coassembles with DRC1 to form a central scaffold needed for assembly of the N-DRC and its attachment to the outer doublet microtubules. The chain is Dynein regulatory complex subunit 2 (ccdc65) from Danio rerio (Zebrafish).